Consider the following 811-residue polypeptide: Zinc finger CCCH domain-containing protein 11A (811 aa).

C3H1-type zinc fingers lie at residues 2 to 30 (PNQGEDCYFFFFYSTCTKGDSCPFRHCEA), 32 to 58 (LGNETVCTLWQEGRCFRQVCRFRHMEI), and 61 to 87 (KRSEIPCYWENQPTGCQKLNCAFHHNR). At Ser-109 the chain carries Phosphoserine. Glycyl lysine isopeptide (Lys-Gly) (interchain with G-Cter in SUMO2) cross-links involve residues Lys-115 and Lys-125. Ser-133 carries the phosphoserine modification. Disordered regions lie at residues 140-195 (MKVE…GLRV), 224-258 (KKMKEKSKKQGEGSSGVSSLLLHPEPVPGPEKENV), 286-352 (GKRK…EKVN), and 368-434 (ERAS…TCIK). A Glycyl lysine isopeptide (Lys-Gly) (interchain with G-Cter in SUMO2) cross-link involves residue Lys-141. 2 positions are modified to phosphoserine: Ser-150 and Ser-172. Positions 161-176 (ADDDEDDDDQFSEEGD) are enriched in acidic residues. Position 291 is a phosphoserine (Ser-291). Composition is skewed to basic and acidic residues over residues 310–323 (KKVEAPEANIDKTP) and 368–391 (ERASQKRGELQTKLKTEGPSKTDD). A Phosphothreonine modification is found at Thr-322. Residues 363-424 (EEILLERASQ…KHRQQEAERQ (62 aa)) adopt a coiled-coil conformation. Ser-371 is modified (phosphoserine). Residues 392-403 (STSGARSSSTIR) show a composition bias toward polar residues. Residues 418 to 434 (QQEAERQKSKKDTTCIK) show a composition bias toward basic and acidic residues. Residue Lys-479 forms a Glycyl lysine isopeptide (Lys-Gly) (interchain with G-Cter in SUMO2) linkage. The tract at residues 483 to 550 (ALRVQQSSES…KEASGETTGV (68 aa)) is disordered. Over residues 487–499 (QQSSESSTSSPSQ) the composition is skewed to low complexity. Lys-620 is covalently cross-linked (Glycyl lysine isopeptide (Lys-Gly) (interchain with G-Cter in SUMO2)). The interval 716–769 (TVPEAENPRDSLVLPPTQSSSDSSPPEVSGPSSSQMSMKTRRLSSASTGKPQLS) is disordered. The segment covering 730-749 (PPTQSSSDSSPPEVSGPSSS) has biased composition (low complexity). Over residues 750–766 (QMSMKTRRLSSASTGKP) the composition is skewed to polar residues.

Interacts with TREX complex components THOC2, DDX39 and POLDIP3; the interactions are ATP-dependent. Interacts with PABPN1; this interaction retains ZC3H11A in nuclear speckles. Interacts with KPNA3.

Its subcellular location is the nucleus speckle. Functionally, through its association with TREX complex components, may participate in the export and post-transcriptional coordination of selected mRNA transcripts, including those required to maintain the metabolic processes in embryonic cells. Binds RNA. In Pongo abelii (Sumatran orangutan), this protein is Zinc finger CCCH domain-containing protein 11A (ZC3H11A).